The primary structure comprises 254 residues: 3-deoxy-manno-octulosonate cytidylyltransferase (254 aa).

Belongs to the KdsB family.

The protein resides in the cytoplasm. The catalysed reaction is 3-deoxy-alpha-D-manno-oct-2-ulosonate + CTP = CMP-3-deoxy-beta-D-manno-octulosonate + diphosphate. Its pathway is nucleotide-sugar biosynthesis; CMP-3-deoxy-D-manno-octulosonate biosynthesis; CMP-3-deoxy-D-manno-octulosonate from 3-deoxy-D-manno-octulosonate and CTP: step 1/1. It functions in the pathway bacterial outer membrane biogenesis; lipopolysaccharide biosynthesis. Activates KDO (a required 8-carbon sugar) for incorporation into bacterial lipopolysaccharide in Gram-negative bacteria. The protein is 3-deoxy-manno-octulosonate cytidylyltransferase of Ectopseudomonas mendocina (strain ymp) (Pseudomonas mendocina).